The primary structure comprises 250 residues: Ribosomal RNA small subunit methyltransferase J (250 aa).

Residues 101-102, 117-118, 153-154, and Asp171 contribute to the S-adenosyl-L-methionine site; these read RD, ER, and SS.

It belongs to the methyltransferase superfamily. RsmJ family.

It localises to the cytoplasm. The catalysed reaction is guanosine(1516) in 16S rRNA + S-adenosyl-L-methionine = N(2)-methylguanosine(1516) in 16S rRNA + S-adenosyl-L-homocysteine + H(+). Its function is as follows. Specifically methylates the guanosine in position 1516 of 16S rRNA. In Escherichia coli O81 (strain ED1a), this protein is Ribosomal RNA small subunit methyltransferase J.